A 622-amino-acid chain; its full sequence is Intermediate filament protein ifc-2 (622 aa).

Residues 19-54 form a head region; it reads SGTYASGFGQLVSGMSSAGAICTTQIRDAREREKRE. One can recognise an IF rod domain in the interval 51 to 399; it reads EKREIGLLND…ILLNGANVTT (349 aa). The interval 55–86 is coil 1A; it reads IGLLNDRLADYIEKVRFLEAQNRCLSHDIDIL. Residues 87–99 form a linker 1 region; sequence RNGFSGGGHVSGL. A coil 1B region spans residues 100–237; the sequence is FDAEINQAKH…TENNVRIEQE (138 aa). Positions 238 to 255 are linker 12; it reads LVFIRRDTTADNRDYFRH. The interval 256 to 399 is coil 2; it reads ELQAAIRDIR…ILLNGANVTT (144 aa). A tail region spans residues 400–550; it reads YTSNTHGSGS…RVDVGGFRIE (151 aa). The LTD domain occupies 509–622; that stretch reads SGRHFHSWYL…EERAWFVYLD (114 aa).

This sequence belongs to the intermediate filament family. As to expression, expressed in intestinal cells and at desmosomes in intestine and pharynx of the larva.

It localises to the cytoplasm. In terms of biological role, cytoplasmic intermediate filaments provide mechanical strength to cells. Not essential protein, although its absence leads to mild defects in locomotion. This chain is Intermediate filament protein ifc-2 (ifc-2), found in Caenorhabditis elegans.